We begin with the raw amino-acid sequence, 383 residues long: 8-amino-7-oxononanoate synthase (383 aa).

Positions 27 and 34 each coordinate substrate. Gly114–Tyr115 lines the pyridoxal 5'-phosphate pocket. A substrate-binding site is contributed by His139. Pyridoxal 5'-phosphate contacts are provided by residues Ser187, Asp212–His215, and Thr232–Lys235. Residue Lys235 is modified to N6-(pyridoxal phosphate)lysine. Substrate is bound at residue Thr344.

This sequence belongs to the class-II pyridoxal-phosphate-dependent aminotransferase family. BioF subfamily. As to quaternary structure, homodimer. It depends on pyridoxal 5'-phosphate as a cofactor.

The catalysed reaction is 6-carboxyhexanoyl-[ACP] + L-alanine + H(+) = (8S)-8-amino-7-oxononanoate + holo-[ACP] + CO2. Its pathway is cofactor biosynthesis; biotin biosynthesis. Catalyzes the decarboxylative condensation of pimeloyl-[acyl-carrier protein] and L-alanine to produce 8-amino-7-oxononanoate (AON), [acyl-carrier protein], and carbon dioxide. This Methylorubrum extorquens (strain CM4 / NCIMB 13688) (Methylobacterium extorquens) protein is 8-amino-7-oxononanoate synthase.